Reading from the N-terminus, the 241-residue chain is tRNA pseudouridine synthase A (241 aa).

The active-site Nucleophile is D51. Y110 lines the substrate pocket.

This sequence belongs to the tRNA pseudouridine synthase TruA family. In terms of assembly, homodimer.

The enzyme catalyses uridine(38/39/40) in tRNA = pseudouridine(38/39/40) in tRNA. Its function is as follows. Formation of pseudouridine at positions 38, 39 and 40 in the anticodon stem and loop of transfer RNAs. In Campylobacter jejuni subsp. jejuni serotype O:23/36 (strain 81-176), this protein is tRNA pseudouridine synthase A.